Here is a 342-residue protein sequence, read N- to C-terminus: Phosphoribosylformylglycinamidine cyclo-ligase (342 aa).

Belongs to the AIR synthase family.

It is found in the cytoplasm. It catalyses the reaction 2-formamido-N(1)-(5-O-phospho-beta-D-ribosyl)acetamidine + ATP = 5-amino-1-(5-phospho-beta-D-ribosyl)imidazole + ADP + phosphate + H(+). It participates in purine metabolism; IMP biosynthesis via de novo pathway; 5-amino-1-(5-phospho-D-ribosyl)imidazole from N(2)-formyl-N(1)-(5-phospho-D-ribosyl)glycinamide: step 2/2. The polypeptide is Phosphoribosylformylglycinamidine cyclo-ligase (Gloeothece citriformis (strain PCC 7424) (Cyanothece sp. (strain PCC 7424))).